Reading from the N-terminus, the 269-residue chain is Phosphonates import ATP-binding protein PhnC 2 (269 aa).

The ABC transporter domain maps to 2–246 (LRIDSLSKRY…VLNEIYGEED (245 aa)). An ATP-binding site is contributed by 35–42 (GPSGAGKS). The tract at residues 246–269 (DWNASGPAQDSEENEAVSAGVATH) is disordered.

The protein belongs to the ABC transporter superfamily. Phosphonates importer (TC 3.A.1.9.1) family. The complex is composed of two ATP-binding proteins (PhnC), two transmembrane proteins (PhnE) and a solute-binding protein (PhnD).

The protein resides in the cell inner membrane. The enzyme catalyses phosphonate(out) + ATP + H2O = phosphonate(in) + ADP + phosphate + H(+). Functionally, part of the ABC transporter complex PhnCDE involved in phosphonates import. Responsible for energy coupling to the transport system. The sequence is that of Phosphonates import ATP-binding protein PhnC 2 from Synechococcus sp. (strain JA-2-3B'a(2-13)) (Cyanobacteria bacterium Yellowstone B-Prime).